The sequence spans 158 residues: Protein-export protein SecB (158 aa).

The protein belongs to the SecB family. In terms of assembly, homotetramer, a dimer of dimers. One homotetramer interacts with 1 SecA dimer.

Its subcellular location is the cytoplasm. Its function is as follows. One of the proteins required for the normal export of preproteins out of the cell cytoplasm. It is a molecular chaperone that binds to a subset of precursor proteins, maintaining them in a translocation-competent state. It also specifically binds to its receptor SecA. The chain is Protein-export protein SecB from Rhodopseudomonas palustris (strain BisB5).